Reading from the N-terminus, the 275-residue chain is Large ribosomal subunit protein uL2c (275 aa).

The segment at 225 to 275 is disordered; it reads MNPCDHPHGGGEGRSPIGRPRPVSPWGKPALGQRTRKGHKYSDQMILRRRK.

Belongs to the universal ribosomal protein uL2 family. As to quaternary structure, part of the 50S ribosomal subunit.

It is found in the plastid. It localises to the chloroplast. The chain is Large ribosomal subunit protein uL2c (rpl2) from Oltmannsiellopsis viridis (Marine flagellate).